A 256-amino-acid polypeptide reads, in one-letter code: Thiazole synthase (256 aa).

Lysine 96 serves as the catalytic Schiff-base intermediate with DXP. 1-deoxy-D-xylulose 5-phosphate is bound by residues glycine 157, 183–184 (AG), and 205–206 (NT).

It belongs to the ThiG family. Homotetramer. Forms heterodimers with either ThiH or ThiS.

It is found in the cytoplasm. The catalysed reaction is [ThiS sulfur-carrier protein]-C-terminal-Gly-aminoethanethioate + 2-iminoacetate + 1-deoxy-D-xylulose 5-phosphate = [ThiS sulfur-carrier protein]-C-terminal Gly-Gly + 2-[(2R,5Z)-2-carboxy-4-methylthiazol-5(2H)-ylidene]ethyl phosphate + 2 H2O + H(+). It functions in the pathway cofactor biosynthesis; thiamine diphosphate biosynthesis. Catalyzes the rearrangement of 1-deoxy-D-xylulose 5-phosphate (DXP) to produce the thiazole phosphate moiety of thiamine. Sulfur is provided by the thiocarboxylate moiety of the carrier protein ThiS. In vitro, sulfur can be provided by H(2)S. This Bacillus cytotoxicus (strain DSM 22905 / CIP 110041 / 391-98 / NVH 391-98) protein is Thiazole synthase.